The primary structure comprises 518 residues: MNVIEKASEGLSRTYEIVIPADDLQARLAAKIEEIRPEVRLKGFRPGKVPTSHIRKMFGESIMGDLLNELVPDTTQKTLDEKKLRPASQPDISVTSEAKDVLAGKADFVFEIALEIMPDFEPADPAKLSVTRPVAEVEDAEVDEALERLANESREFAAKKGGKNAKAEDGDVVVIDFVGKLDGEVFEGGSAEDARVAIGDGAFIPGFEEQLLGAKVGEERELNVTFPEDYQAAQLAGKAAVFDVTVKGLESPQEAKVDDELAKRLGLENLDGLKDALKKRFAGEHGQQSRMKVKRDLLDKLDAEHKFDLPPKMVGAEFDNIWREVAHAIEQDQLEDEDKNKSEDELKSEYREIAERRVRLGLVLAEIGRRNNIDVTQEELSRAINQEAVKYPGQERQVVEFYQKNPNAVAQMRAPIYEEKVVDYILELADVTETTVSKEALYADEDEAPAKPAKKAVAKKKAPAKKAAAKSDDKPAAKKAPAKKAPAKKAAAKDEAPAKKPAAKKKAPAKKAAAKKDA.

Positions 170–255 (GDVVVIDFVG…VKGLESPQEA (86 aa)) constitute a PPIase FKBP-type domain. The segment at 447 to 518 (EAPAKPAKKA…AKKAAAKKDA (72 aa)) is disordered. Basic residues-rich tracts occupy residues 452–468 (PAKK…KKAA) and 501–518 (PAAK…KKDA).

It belongs to the FKBP-type PPIase family. Tig subfamily.

Its subcellular location is the cytoplasm. The enzyme catalyses [protein]-peptidylproline (omega=180) = [protein]-peptidylproline (omega=0). Involved in protein export. Acts as a chaperone by maintaining the newly synthesized protein in an open conformation. Functions as a peptidyl-prolyl cis-trans isomerase. The sequence is that of Trigger factor from Maricaulis maris (strain MCS10) (Caulobacter maris).